A 696-amino-acid chain; its full sequence is ATP-dependent zinc metalloprotease FtsH (696 aa).

The Cytoplasmic portion of the chain corresponds to 1 to 29; the sequence is MWLQVTNCSTLHSSLSYCGANTLSDMAKN. The chain crosses the membrane as a helical span at residues 30–50; it reads LILWLVIAVVLMSVFQSFGPS. Over 51–124 the chain is Periplasmic; that stretch reads DSAGRQVDYT…LGTPPEEPSL (74 aa). The chain crosses the membrane as a helical span at residues 125-145; sequence LASIFISWFPMLLLIGVWVFF. The Cytoplasmic segment spans residues 146-696; that stretch reads MRQMQGGGGG…APKEDDKPQA (551 aa). An ATP-binding site is contributed by 219-226; that stretch reads GPPGTGKT. H441 serves as a coordination point for Zn(2+). Residue E442 is part of the active site. Zn(2+) contacts are provided by H445 and D519. Residues 627-696 form a disordered region; it reads RAPKGWGDTD…APKEDDKPQA (70 aa). Basic and acidic residues predominate over residues 650–696; it reads PEAKTESAPEAKAEANVETEEKPVAADSEELKPKAEQAPKEDDKPQA.

The protein in the central section; belongs to the AAA ATPase family. It in the C-terminal section; belongs to the peptidase M41 family. In terms of assembly, homohexamer. Zn(2+) is required as a cofactor.

Its subcellular location is the cell inner membrane. In terms of biological role, acts as a processive, ATP-dependent zinc metallopeptidase for both cytoplasmic and membrane proteins. Plays a role in the quality control of integral membrane proteins. This is ATP-dependent zinc metalloprotease FtsH from Photobacterium profundum (strain SS9).